Reading from the N-terminus, the 211-residue chain is MSAATLEQGLAELGLHLSPATQARLAAFATLLQKWNRVYNLTSIRDAGQVVTHHLLDSLAVLPHLEGITTLADVGSGGGLPGIPLALAAPDCHPALAVTSIETVNKKASFQQQAKIELGLANFTVVNERVENVRPEAKFDAVISRAFSELLDFVGLTAHLLRPGGRFLAMKGVYPRDEIARLPAGFRVVEVHPLTVPGLGAERHLIILERN.

Residues Gly-75, Leu-80, 130-131 (VE), and Arg-145 contribute to the S-adenosyl-L-methionine site.

The protein belongs to the methyltransferase superfamily. RNA methyltransferase RsmG family.

The protein localises to the cytoplasm. The catalysed reaction is guanosine(527) in 16S rRNA + S-adenosyl-L-methionine = N(7)-methylguanosine(527) in 16S rRNA + S-adenosyl-L-homocysteine. In terms of biological role, specifically methylates the N7 position of guanine in position 527 of 16S rRNA. The polypeptide is Ribosomal RNA small subunit methyltransferase G (Aromatoleum aromaticum (strain DSM 19018 / LMG 30748 / EbN1) (Azoarcus sp. (strain EbN1))).